We begin with the raw amino-acid sequence, 742 residues long: Probable LRR receptor-like serine/threonine-protein kinase At2g02780 (742 aa).

The N-terminal stretch at Met1–Ser25 is a signal peptide. Over Glu26–Leu354 the chain is Extracellular. 9 LRR repeats span residues His74–Lys96, Leu104–Lys128, Ser130–Leu154, Asn156–Gly177, Leu178–Thr204, Ser206–Leu223, Asn224–Ile247, Ser249–Ser271, and Lys273–Ser294. N-linked (GlcNAc...) asparagine glycosylation is present at Asn85. A glycan (N-linked (GlcNAc...) asparagine) is linked at Asn137. The N-linked (GlcNAc...) asparagine glycan is linked to Asn209. Asn266 carries an N-linked (GlcNAc...) asparagine glycan. N-linked (GlcNAc...) asparagine glycosylation is present at Asn299. The chain crosses the membrane as a helical span at residues Val355 to Ile375. Residues Ala376 to Glu742 lie on the Cytoplasmic side of the membrane. The segment at Asp386–Pro424 is disordered. A compositionally biased stretch (polar residues) spans Val406–Leu417. Residues Thr426–Ile720 enclose the Protein kinase domain.

It belongs to the protein kinase superfamily. Ser/Thr protein kinase family.

It localises to the membrane. It carries out the reaction L-seryl-[protein] + ATP = O-phospho-L-seryl-[protein] + ADP + H(+). The enzyme catalyses L-threonyl-[protein] + ATP = O-phospho-L-threonyl-[protein] + ADP + H(+). The protein is Probable LRR receptor-like serine/threonine-protein kinase At2g02780 of Arabidopsis thaliana (Mouse-ear cress).